Here is a 540-residue protein sequence, read N- to C-terminus: Thiamine biosynthetic bifunctional enzyme (540 aa).

The tract at residues 1 to 238 (MVFTKEEVDY…LDATRYQFVE (238 aa)) is thiamine-phosphate synthase. 4-amino-2-methyl-5-(diphosphooxymethyl)pyrimidine-binding positions include 43 to 47 (QIREK) and Asn75. Mg(2+) is bound by residues Asp76 and Asp95. Ser114 is a binding site for 4-amino-2-methyl-5-(diphosphooxymethyl)pyrimidine. 143–145 (TST) provides a ligand contact to 2-[(2R,5Z)-2-carboxy-4-methylthiazol-5(2H)-ylidene]ethyl phosphate. Residue Lys146 participates in 4-amino-2-methyl-5-(diphosphooxymethyl)pyrimidine binding. 2-[(2R,5Z)-2-carboxy-4-methylthiazol-5(2H)-ylidene]ethyl phosphate-binding positions include Gly181 and 209-210 (VS). Residues 239 to 540 (CELNNTFPTT…KWSASLKKFK (302 aa)) are hydroxyethylthiazole kinase. Met290 lines the 5-(2-hydroxyethyl)-4-methylthiazole pocket. The ATP site is built by Lys365 and Thr415. Ala462 is a 5-(2-hydroxyethyl)-4-methylthiazole binding site. Residue Cys465 is the Proton acceptor; for hydroxyethylthiazole kinase activity of the active site.

In the N-terminal section; belongs to the thiamine-phosphate synthase family. This sequence in the C-terminal section; belongs to the Thz kinase family. In terms of assembly, homooctamer. The cofactor is Mg(2+).

The enzyme catalyses 2-[(2R,5Z)-2-carboxy-4-methylthiazol-5(2H)-ylidene]ethyl phosphate + 4-amino-2-methyl-5-(diphosphooxymethyl)pyrimidine + 2 H(+) = thiamine phosphate + CO2 + diphosphate. It catalyses the reaction 2-(2-carboxy-4-methylthiazol-5-yl)ethyl phosphate + 4-amino-2-methyl-5-(diphosphooxymethyl)pyrimidine + 2 H(+) = thiamine phosphate + CO2 + diphosphate. It carries out the reaction 4-methyl-5-(2-phosphooxyethyl)-thiazole + 4-amino-2-methyl-5-(diphosphooxymethyl)pyrimidine + H(+) = thiamine phosphate + diphosphate. The catalysed reaction is 5-(2-hydroxyethyl)-4-methylthiazole + ATP = 4-methyl-5-(2-phosphooxyethyl)-thiazole + ADP + H(+). It functions in the pathway cofactor biosynthesis; thiamine diphosphate biosynthesis; 4-methyl-5-(2-phosphoethyl)-thiazole from 5-(2-hydroxyethyl)-4-methylthiazole: step 1/1. It participates in cofactor biosynthesis; thiamine diphosphate biosynthesis; thiamine phosphate from 4-amino-2-methyl-5-diphosphomethylpyrimidine and 4-methyl-5-(2-phosphoethyl)-thiazole: step 1/1. Functionally, essential for thiamine biosynthesis. The kinase activity is involved in the salvage synthesis of TH-P from the thiazole. Condenses 4-methyl-5-(beta-hydroxyethyl)thiazole monophosphate (THZ-P) and 2-methyl-4-amino-5-hydroxymethyl pyrimidine pyrophosphate (HMP-PP) to form thiamine monophosphate (TMP). The chain is Thiamine biosynthetic bifunctional enzyme (THI6) from Saccharomyces cerevisiae (strain ATCC 204508 / S288c) (Baker's yeast).